The sequence spans 247 residues: Mitochondrial inner membrane protease ATP23 (247 aa).

His-146 contributes to the a divalent metal cation binding site. The active site involves Glu-147. His-150 lines the a divalent metal cation pocket.

This sequence belongs to the peptidase M76 family.

The protein localises to the mitochondrion inner membrane. Has a dual role in the assembly of mitochondrial ATPase. Acts as a protease that removes N-terminal residues of mitochondrial ATPase CF(0) subunit 6 at the intermembrane space side. Also involved in the correct assembly of the membrane-embedded ATPase CF(0) particle, probably mediating association of subunit 6 with the subunit 9 ring. The sequence is that of Mitochondrial inner membrane protease ATP23 (ATP23) from Eremothecium gossypii (strain ATCC 10895 / CBS 109.51 / FGSC 9923 / NRRL Y-1056) (Yeast).